The chain runs to 156 residues: ATP synthase subunit b (156 aa).

The chain crosses the membrane as a helical span at residues 11 to 31 (AIAFAIFVMFCMKFVWPPLIG).

The protein belongs to the ATPase B chain family. In terms of assembly, F-type ATPases have 2 components, F(1) - the catalytic core - and F(0) - the membrane proton channel. F(1) has five subunits: alpha(3), beta(3), gamma(1), delta(1), epsilon(1). F(0) has three main subunits: a(1), b(2) and c(10-14). The alpha and beta chains form an alternating ring which encloses part of the gamma chain. F(1) is attached to F(0) by a central stalk formed by the gamma and epsilon chains, while a peripheral stalk is formed by the delta and b chains.

Its subcellular location is the cell inner membrane. F(1)F(0) ATP synthase produces ATP from ADP in the presence of a proton or sodium gradient. F-type ATPases consist of two structural domains, F(1) containing the extramembraneous catalytic core and F(0) containing the membrane proton channel, linked together by a central stalk and a peripheral stalk. During catalysis, ATP synthesis in the catalytic domain of F(1) is coupled via a rotary mechanism of the central stalk subunits to proton translocation. Functionally, component of the F(0) channel, it forms part of the peripheral stalk, linking F(1) to F(0). This Psychrobacter cryohalolentis (strain ATCC BAA-1226 / DSM 17306 / VKM B-2378 / K5) protein is ATP synthase subunit b.